Reading from the N-terminus, the 265-residue chain is Cell division protein DivIB (265 aa).

Over 1–30 (MKNSKVIKLQDRVPKLKNQQKKKKKNVNHR) the chain is Cytoplasmic. Residues 31–51 (LILYISILFLLVLFLIYFRSP) form a helical membrane-spanning segment. The Extracellular portion of the chain corresponds to 52-265 (LSNIKKISVF…NRMIVFNTLS (214 aa)). The 69-residue stretch at 53 to 121 (SNIKKISVFG…NKIDVHIEEY (69 aa)) folds into the POTRA domain.

This sequence belongs to the FtsQ/DivIB family. DivIB subfamily.

The protein resides in the cell membrane. In terms of biological role, cell division protein that may be involved in stabilizing or promoting the assembly of the division complex. This Bacillus anthracis protein is Cell division protein DivIB.